The primary structure comprises 188 residues: dCTP deaminase (188 aa).

Residues 111-116 (KSTYAR), 135-137 (TLE), glutamine 156, tyrosine 170, lysine 179, and glutamine 180 contribute to the dCTP site. Glutamate 137 serves as the catalytic Proton donor/acceptor.

Belongs to the dCTP deaminase family. In terms of assembly, homotrimer.

It carries out the reaction dCTP + H2O + H(+) = dUTP + NH4(+). The protein operates within pyrimidine metabolism; dUMP biosynthesis; dUMP from dCTP (dUTP route): step 1/2. Its function is as follows. Catalyzes the deamination of dCTP to dUTP. The chain is dCTP deaminase from Orientia tsutsugamushi (strain Boryong) (Rickettsia tsutsugamushi).